Here is a 94-residue protein sequence, read N- to C-terminus: MSNEIVDKLYKVILDRIEKRPTGSYTAEIVNKGKAYVARKVGEESVETIVASLAENKERFISEVADLIYHLLVLMALEGVTPDDIYRELERRRK.

Belongs to the PRA-PH family.

The protein localises to the cytoplasm. It catalyses the reaction 1-(5-phospho-beta-D-ribosyl)-ATP + H2O = 1-(5-phospho-beta-D-ribosyl)-5'-AMP + diphosphate + H(+). The protein operates within amino-acid biosynthesis; L-histidine biosynthesis; L-histidine from 5-phospho-alpha-D-ribose 1-diphosphate: step 2/9. The polypeptide is Phosphoribosyl-ATP pyrophosphatase (Saccharolobus islandicus (strain Y.N.15.51 / Yellowstone #2) (Sulfolobus islandicus)).